The primary structure comprises 104 residues: Probable monothiol glutaredoxin 2 (104 aa).

The region spanning 7–104 (FEFIENEIKN…NGELEKMLKG (98 aa)) is the Glutaredoxin domain. A glutathione-binding site is contributed by Lys24. Cys32 provides a ligand contact to [2Fe-2S] cluster. Glutathione contacts are provided by residues Arg61, Phe73, and 86–87 (CD).

The protein belongs to the glutaredoxin family. Monothiol subfamily.

This Rickettsia felis (strain ATCC VR-1525 / URRWXCal2) (Rickettsia azadi) protein is Probable monothiol glutaredoxin 2 (grxC2).